Here is a 455-residue protein sequence, read N- to C-terminus: N(5)-hydroxyornithine:cis-anhydromevalonyl coenzyme A-N(5)-transacylase SIDF (455 aa).

The PTS1-type peroxisomal targeting signal motif lies at 453–455 (PKL).

The protein belongs to the lysine N-acyltransferase mbtK family.

Its subcellular location is the peroxisome. It functions in the pathway siderophore biosynthesis. In terms of biological role, hydroxyornithine transacylase; part of the gene cluster that mediates the biosynthesis of at least 11 siderophores, including beauverichelin A, dimerumic acid (DA), Na-dimethyl coprogen (NADC), eleutherazine B, ferricrocin (FC), fusarinine A, fusarinine C (FsC), metachelin A, mevalonolactone, rhodotorulic acid (RA) and tenellin. This cocktail of siderophores for iron metabolism is essential for virulence, and more specifically for the fungal virulence in penetrating through the host cuticle. Siderophore synthesis is also involved in conidial germination under iron-deficient conditions. For biosynthesis of fusarinine C, the transacylase SIDF transfers anhydromevalonyl to N(5)-hydroxyornithine. The required anhydromevalonyl-CoA moiety is derived from mevalonate by CoA ligation and dehydration catalyzed by SIDI and sidH respectively. This is N(5)-hydroxyornithine:cis-anhydromevalonyl coenzyme A-N(5)-transacylase SIDF from Beauveria bassiana (strain ARSEF 2860) (White muscardine disease fungus).